The following is a 1161-amino-acid chain: Immunoglobulin superfamily member 3 (1161 aa).

A signal peptide spans 1–16 (MGTAALLILLAGVSWA). Over 17–1091 (QREVAIQPGP…LQSTICANDA (1075 aa)) the chain is Extracellular. 8 consecutive Ig-like C2-type domains span residues 18–135 (REVA…AKVN), 140–258 (PDTL…WFPL), 272–382 (PTDK…RGPS), 402–523 (PLRT…WQLL), 541–651 (FAVT…RETS), 674–796 (PRLQ…EETS), 806–930 (PDAN…WYRR), and 947–1063 (PQLQ…WYLL). 2 disulfides stabilise this stretch: Cys-39–Cys-117 and Cys-164–Cys-242. Positions 246–248 (EWI) match the EWI motif motif. 6 cysteine pairs are disulfide-bonded: Cys-298–Cys-372, Cys-428–Cys-507, Cys-562–Cys-641, Cys-697–Cys-775, Cys-831–Cys-914, and Cys-970–Cys-1047. A helical membrane pass occupies residues 1092–1112 (LFYLVFFYPFPIFGILIITIL). The Cytoplasmic portion of the chain corresponds to 1113-1161 (LVRFRHRPTGKPGEGKNGVPLLWIKEPHLNYSPTCLEPPVLSIHPGTID).

Its subcellular location is the membrane. The protein is Immunoglobulin superfamily member 3 (igsf3) of Xenopus tropicalis (Western clawed frog).